Consider the following 127-residue polypeptide: MATTSRKKKKVKVTPEGTVHIKASFNNVLVTITDMQGNTVSWSSAGKNGFKGSKKNTPYASQITSESAAKEAYDLGMRYVHVFIKGPGSGRDAAIRALQGAGLEVRSIKDITPLPHNGCRPPKRRRV.

This sequence belongs to the universal ribosomal protein uS11 family. As to quaternary structure, part of the 30S ribosomal subunit. Interacts with proteins S7 and S18. Binds to IF-3.

Functionally, located on the platform of the 30S subunit, it bridges several disparate RNA helices of the 16S rRNA. Forms part of the Shine-Dalgarno cleft in the 70S ribosome. This is Small ribosomal subunit protein uS11 from Chlorobium phaeobacteroides (strain BS1).